The following is a 439-amino-acid chain: Glucose-1-phosphate adenylyltransferase (439 aa).

Alpha-D-glucose 1-phosphate contacts are provided by residues tyrosine 116, glycine 182, 197–198 (EK), and serine 215.

The protein belongs to the bacterial/plant glucose-1-phosphate adenylyltransferase family. In terms of assembly, homotetramer.

The catalysed reaction is alpha-D-glucose 1-phosphate + ATP + H(+) = ADP-alpha-D-glucose + diphosphate. The protein operates within glycan biosynthesis; glycogen biosynthesis. Functionally, involved in the biosynthesis of ADP-glucose, a building block required for the elongation reactions to produce glycogen. Catalyzes the reaction between ATP and alpha-D-glucose 1-phosphate (G1P) to produce pyrophosphate and ADP-Glc. This is Glucose-1-phosphate adenylyltransferase from Pasteurella multocida (strain Pm70).